Here is a 668-residue protein sequence, read N- to C-terminus: Bestrophin-3 (668 aa).

Residues 1-31 are Cytoplasmic-facing; sequence MTVTYSSKVANATFFGFHRLLLKWRGSIYKL. Residue Ala-10 participates in Ca(2+) binding. Residues 32–51 traverse the membrane as a helical segment; the sequence is LYREFIVFAVLYTAISLVYR. The Extracellular segment spans residues 52 to 60; the sequence is LLLTGVQKR. The chain crosses the membrane as a helical span at residues 61–82; sequence YFEKLSIYCDRYAEQIPVTFVL. Topologically, residues 83 to 237 are cytoplasmic; that stretch reads GFYVTLVVNR…DWVGIPLVYT (155 aa). Residues 238–255 traverse the membrane as a helical segment; the sequence is QVVTLAVYTFFFACLIGR. Over 256 to 274 the chain is Extracellular; the sequence is QFLDPTKGYAGHDLDLYIP. The chain crosses the membrane as a helical span at residues 275-288; that stretch reads IFTLLQFFFYAGWL. The Cytoplasmic segment spans residues 289-668; sequence KVAEQLINPF…LNKETEESPK (380 aa). Ca(2+)-binding residues include Gln-293, Asn-296, Asp-301, and Asp-304. Disordered regions lie at residues 400 to 454, 473 to 493, and 532 to 570; these read SAHE…KKSC, RETSQTSTLQSLTPQSSVRTS, and TGVQPSKTEQQQGPMGSILSPSEKETPPGGPSPQTVSAS. A compositionally biased stretch (basic and acidic residues) spans 425 to 436; that stretch reads PRDDLSPARDLL. Over residues 475–489 the composition is skewed to low complexity; the sequence is TSQTSTLQSLTPQSS. Residues 532–545 show a composition bias toward polar residues; it reads TGVQPSKTEQQQGP.

It belongs to the anion channel-forming bestrophin (TC 1.A.46) family. Calcium-sensitive chloride channel subfamily. Present in skeletal muscle and weakly in brain, spinal cord, bone marrow and retina.

It localises to the cell membrane. It catalyses the reaction chloride(in) = chloride(out). Its function is as follows. Ligand-gated anion channel that allows the movement of chloride monoatomic anions across cell membranes when activated by calcium (Ca2+). This chain is Bestrophin-3, found in Homo sapiens (Human).